Consider the following 184-residue polypeptide: ADP-ribosylation factor-like protein 2 (184 aa).

The N-myristoyl glycine moiety is linked to residue Gly2. GTP contacts are provided by residues Gly23–Thr30, Asp66–Gln70, and Asn125–Asp128.

Belongs to the small GTPase superfamily. Arf family.

May be involved in trafficking events within the endosomal system. This is ADP-ribosylation factor-like protein 2 (arl2) from Dictyostelium discoideum (Social amoeba).